The following is a 367-amino-acid chain: MNCKNMDTSYEIINYLTKDELDIDLSCMDKKERYKIWKRLPKCELHCHLDVCFSVDFFLNVIRKYNIQPNMSDEEIIDYYLFSKPGKSLDEFVEKALRLTDIYIDYTVVEDLAKHAVFNKYKEGVVLMEFRYSPSFMSFKHNLDKDLIHEAIVKGLNEAVALLEYKIQVGLLCTGDGGLSHERMKEAAEFCIKHKKDFVGYDHAGHEVDLKPFKDIFDNIREEGISLSVHAGEDVSIPNLNSLYTAINLLHVKRIGHGIRVSESQELIDLVKEKDILLEVCPISNVLLNNVKSMDTHPIRMLYDAGVKVSVNSDDPGMFLTNITDNYEELYTHLNFTLADFMKMNLWAVQKSFVDPDIKNKIISKYF.

The Zn(2+) site is built by histidine 46 and histidine 48. Residues 48–50 (HLD), aspartate 176, and glycine 205 each bind a purine D-ribonucleoside. The segment at 174-188 (TGDGGLSHERMKEAA) is gating helix loop; regulates binding affinity for substrates and thus substrate selectivity. Histidine 230 contributes to the Zn(2+) binding site. 3 residues coordinate a purine D-ribonucleoside: glutamate 233, histidine 257, and aspartate 314. Aspartate 314 contacts Zn(2+).

This sequence belongs to the metallo-dependent hydrolases superfamily. Adenosine and AMP deaminases family. Zn(2+) is required as a cofactor.

It carries out the reaction adenosine + H2O + H(+) = inosine + NH4(+). The enzyme catalyses S-methyl-5'-thioadenosine + H2O + H(+) = S-methyl-5'-thioinosine + NH4(+). It participates in purine metabolism; purine nucleoside salvage. With respect to regulation, inhibited by coformycin and methylthiocoformycin (MT-coformycin). Functionally, catalyzes the hydrolytic deamination of adenosine to produce inosine. Unlike mammalian adenosine deaminases, also catalyzes the deamination of 5'-methylthioadenosine (MTA), a by-product of polyamine biosynthesis, to produce 5'-methylthioinosine (MTI). Plays an essential role in the purine salvage pathway which allows the parasite to use host cell purines for the synthesis of nucleic acids. This Plasmodium falciparum (isolate 3D7) protein is Adenosine deaminase.